Consider the following 330-residue polypeptide: Type II methyltransferase M.MthTI (330 aa).

The 326-residue stretch at 3–328 (MDIASFFSGA…KKIKKDLEGV (326 aa)) folds into the SAM-dependent MTase C5-type domain. Cys73 is a catalytic residue.

The protein belongs to the class I-like SAM-binding methyltransferase superfamily. C5-methyltransferase family.

The enzyme catalyses a 2'-deoxycytidine in DNA + S-adenosyl-L-methionine = a 5-methyl-2'-deoxycytidine in DNA + S-adenosyl-L-homocysteine + H(+). Functionally, a methylase that recognizes the double-stranded sequence 5'-GGCC-3', methylates C-3 on both strands, and protects the DNA from cleavage by the MthTI endonuclease. This Methanothermobacter thermautotrophicus (Methanobacterium thermoformicicum) protein is Type II methyltransferase M.MthTI (mthTIM).